The following is a 591-amino-acid chain: L-fucose isomerase (591 aa).

Active-site proton acceptor residues include Glu337 and Asp361. Glu337, Asp361, and His528 together coordinate Mn(2+).

This sequence belongs to the L-fucose isomerase family. In terms of assembly, homohexamer. Requires Mn(2+) as cofactor.

Its subcellular location is the cytoplasm. It carries out the reaction L-fucose = L-fuculose. Its pathway is carbohydrate degradation; L-fucose degradation; L-lactaldehyde and glycerone phosphate from L-fucose: step 1/3. Its function is as follows. Converts the aldose L-fucose into the corresponding ketose L-fuculose. This Escherichia coli (strain UTI89 / UPEC) protein is L-fucose isomerase.